Here is a 161-residue protein sequence, read N- to C-terminus: Putative acetyltransferase SAR0816 (161 aa).

Belongs to the transferase hexapeptide repeat family.

The chain is Putative acetyltransferase SAR0816 from Staphylococcus aureus (strain MRSA252).